The following is a 490-amino-acid chain: Gallate decarboxylase (490 aa).

Mn(2+) is bound at residue Asp165. Prenylated FMN contacts are provided by residues 168 to 170 (IHR) and Gly187. Glu233 is a Mn(2+) binding site. Glu289 (proton acceptor) is an active-site residue.

This sequence belongs to the UbiD family. Prenylated FMN is required as a cofactor. The cofactor is Mn(2+).

It catalyses the reaction 3,4,5-trihydroxybenzoate + H(+) = 1,2,3-trihydroxybenzene + CO2. The catalysed reaction is 3,4-dihydroxybenzoate + H(+) = catechol + CO2. In terms of biological role, involved in tannin degradation. Catalyzes the decarboxylation of gallic acid and protocatechuic acid to pyrogallol and catechol, respectively. The sequence is that of Gallate decarboxylase from Lactiplantibacillus plantarum (strain ATCC BAA-793 / NCIMB 8826 / WCFS1) (Lactobacillus plantarum).